The chain runs to 762 residues: Probable inorganic carbon transporter subunit DabA (762 aa).

The Zn(2+) site is built by Cys279, Asp281, His461, and Cys476.

This sequence belongs to the inorganic carbon transporter (TC 9.A.2) DabA family. In terms of assembly, forms a complex with DabB. Zn(2+) is required as a cofactor.

It localises to the cell inner membrane. Functionally, part of an energy-coupled inorganic carbon pump. In Legionella pneumophila (strain Corby), this protein is Probable inorganic carbon transporter subunit DabA.